The following is a 467-amino-acid chain: MEKISRTKIVDLLKRRDFGAMVNVKGWVRTRRGSKQVNFIALNDGSTINNVQIVVDLANFDEEMLKQITTGACISVNGELTESIGSGQAAEVQARGIEVLGTCDNTYPLQKKGHTMEFLREIAHLRPRTNTFGAVFRIRHNMAIAIHKFFHERGFFYFHTPIITASDCEGAGQMFQVTTKNLYDLKKDENGAIIYDDDFFGKQASLTVSGQLEGELAATALGAIYTFGPTFRAENSNTPRHLAEFWMIEPEVAFNDITDNMDLAEDFIKYCVQWALDNCYDDVKFLNDMFDKGLIERLQGVLKEEFVRLPYTEGIKILEEAVVKGHKFEFPVYWGVDLASEHERYLVEEHFKRPVILTDYPKEIKAFYMKQNEDGKTVRAMDVLFPKIGEIIGGSEREADYDKLMTRIQELGIPMKDMWWYLDTRKFGSCPHSGFGLGFERLLLFVTGMTNIRDVIPFPRTPRNAEF.

Belongs to the class-II aminoacyl-tRNA synthetase family. Homodimer.

Its subcellular location is the cytoplasm. It carries out the reaction tRNA(Asn) + L-asparagine + ATP = L-asparaginyl-tRNA(Asn) + AMP + diphosphate + H(+). The sequence is that of Asparagine--tRNA ligase from Phocaeicola vulgatus (strain ATCC 8482 / DSM 1447 / JCM 5826 / CCUG 4940 / NBRC 14291 / NCTC 11154) (Bacteroides vulgatus).